The sequence spans 610 residues: GATOR complex protein NPRL3 (610 aa).

Residue serine 437 is modified to Phosphoserine. The interval 474 to 501 is disordered; sequence REASEDHSSLASDNIAVQPSSSHKSNFS. Residues 482–501 are compositionally biased toward polar residues; sequence SLASDNIAVQPSSSHKSNFS.

This sequence belongs to the NPR3 family. In terms of assembly, component of the GATOR complex consisting of mio, Nup44A/Seh1, Im11, Nplr3, Nplr2, Wdr24, Wdr59 and Sec13. Within the GATOR complex, probable component of the GATOR1 subcomplex which is likely composed of Iml1, Nplr2 and Nplr3. Interacts with Nprl2.

Its subcellular location is the cytoplasm. The protein resides in the lysosome. In terms of biological role, an essential component of the GATOR subcomplex GATOR1 which functions as an inhibitor of the amino acid-sensing branch of the TORC1 signaling pathway. The two GATOR subcomplexes, GATOR1 and GATOR2, regulate the TORC1 pathway in order to mediate metabolic homeostasis, female gametogenesis and the response to amino acid limitation and complete starvation. The function of GATOR1 in negatively regulating the TORC1 pathway is essential for maintaining baseline levels of TORC1 activity under nutrient rich conditions, and for promoting survival during amino acid or complete starvation by inhibiting TORC1-dependent cell growth and promoting catabolic metabolism and autophagy. In addition, this inhibition of TORC1 is necessary to maintain female fertility under normal conditions and during periods of nutrient stress. GATOR1 and GATOR2 act at different stages of oogenesis to regulate TORC1 in order to control meiotic entry and promote oocyte growth and development. After exactly four mitotic cyst divisions, the GATOR1 complex members (Iml1, Nprl2 and Nprl3) down-regulate TORC1 to slow cellular metabolism and promote the mitotic/meiotic transition. At later stages of oogenesis, the mio and Nup44A components of the GATOR2 complex inhibit GATOR1 and thus activate TORC1 to promote meiotic progression, and drive oocyte growth and development. The polypeptide is GATOR complex protein NPRL3 (Drosophila melanogaster (Fruit fly)).